Reading from the N-terminus, the 150-residue chain is Macrodomain Ter protein (150 aa).

This sequence belongs to the MatP family. Homodimer.

The protein localises to the cytoplasm. In terms of biological role, required for spatial organization of the terminus region of the chromosome (Ter macrodomain) during the cell cycle. Prevents early segregation of duplicated Ter macrodomains during cell division. Binds specifically to matS, which is a 13 bp signature motif repeated within the Ter macrodomain. This Salmonella arizonae (strain ATCC BAA-731 / CDC346-86 / RSK2980) protein is Macrodomain Ter protein.